A 116-amino-acid chain; its full sequence is Large ribosomal subunit protein uL18 (116 aa).

It belongs to the universal ribosomal protein uL18 family. Part of the 50S ribosomal subunit; part of the 5S rRNA/L5/L18/L25 subcomplex. Contacts the 5S and 23S rRNAs.

Its function is as follows. This is one of the proteins that bind and probably mediate the attachment of the 5S RNA into the large ribosomal subunit, where it forms part of the central protuberance. This chain is Large ribosomal subunit protein uL18, found in Marinomonas sp. (strain MWYL1).